We begin with the raw amino-acid sequence, 65 residues long: Large ribosomal subunit protein bL35 (65 aa).

Basic residues predominate over residues 1–10; it reads MPKMKSKSSA. The segment at 1–21 is disordered; it reads MPKMKSKSSAKMRFSVRAGGT.

It belongs to the bacterial ribosomal protein bL35 family.

This Polynucleobacter necessarius subsp. necessarius (strain STIR1) protein is Large ribosomal subunit protein bL35.